The primary structure comprises 213 residues: Kynurenine formamidase (213 aa).

Trp-18 provides a ligand contact to substrate. The Zn(2+) site is built by His-48, His-52, and Asp-54. His-58 (proton donor/acceptor) is an active-site residue. Residues His-160 and Glu-172 each coordinate Zn(2+).

This sequence belongs to the Cyclase 1 superfamily. KynB family. In terms of assembly, homodimer. It depends on Zn(2+) as a cofactor.

The enzyme catalyses N-formyl-L-kynurenine + H2O = L-kynurenine + formate + H(+). Its pathway is amino-acid degradation; L-tryptophan degradation via kynurenine pathway; L-kynurenine from L-tryptophan: step 2/2. Its function is as follows. Catalyzes the hydrolysis of N-formyl-L-kynurenine to L-kynurenine, the second step in the kynurenine pathway of tryptophan degradation. The chain is Kynurenine formamidase from Burkholderia lata (strain ATCC 17760 / DSM 23089 / LMG 22485 / NCIMB 9086 / R18194 / 383).